Consider the following 76-residue polypeptide: MKLISFTGLALLLIVSLIDVEAQNEGACIPHGSVCTTNHAGCCSKLSCDCYRRFEKGVEKGQICWCIETGVTFSKE.

Positions 1-22 (MKLISFTGLALLLIVSLIDVEA) are cleaved as a signal peptide. The propeptide occupies 23 to 26 (QNEG).

It belongs to the neurotoxin 19 (CSTX) family. 07 (U7-Lctx) subfamily. In terms of processing, contains 4 disulfide bonds. In terms of tissue distribution, expressed by the venom gland.

Its subcellular location is the secreted. The chain is U7-lycotoxin-Ls1b from Lycosa singoriensis (Wolf spider).